Here is a 774-residue protein sequence, read N- to C-terminus: Cilium assembly protein DZIP1L (774 aa).

Residues 166-189 (HTCHLCDKTFMNATFLRGHIQRRH) form a C2H2-type zinc finger. Positions 204–450 (LGEVLEELRA…RKVLAALRKN (247 aa)) form a coiled coil. Disordered regions lie at residues 415–435 (MPKA…ASLE), 515–674 (NKEV…ASSG), and 686–774 (KQLE…IPGW). A compositionally biased stretch (acidic residues) spans 421–433 (TEEDSSEEELEAS). A phosphoserine mark is found at S425 and S426. Residues 515 to 526 (NKEVSSRVKQRW) are compositionally biased toward basic and acidic residues. Over residues 597–616 (GPSSTPVSPGSGLSSTPPFS) the composition is skewed to low complexity.

Belongs to the DZIP C2H2-type zinc-finger protein family. Interacts with SEPTIN2.

It is found in the cytoplasm. It localises to the cytoskeleton. The protein resides in the cilium basal body. The protein localises to the microtubule organizing center. Its subcellular location is the centrosome. It is found in the centriole. In terms of biological role, involved in primary cilium formation. Probably acts as a transition zone protein required for localization of PKD1/PC1 and PKD2/PC2 to the ciliary membrane. This chain is Cilium assembly protein DZIP1L, found in Mus musculus (Mouse).